The sequence spans 858 residues: ATP-dependent DNA helicase Q-like SIM (858 aa).

Residues 2–44 enclose the UBA domain; that stretch reads DLSSDQLVMKIVEMGFEKLDALEAVKAVGGKSCDDAVEYILKG. The Helicase ATP-binding domain occupies 177–353; the sequence is LSTWVAHKDC…LESLHLSKET (177 aa). Position 190 to 197 (190 to 197) interacts with ATP; the sequence is AATGSGKS. The DEAH box motif lies at 288–291; that stretch reads DEAH. The tract at residues 402 to 450 is disordered; that stretch reads LAVISRESEEQTDFGSHDSENIHETDYDEDEEDQENSLAKKNSSNGKEL. Basic and acidic residues predominate over residues 416 to 426; the sequence is GSHDSENIHET. The span at 427 to 436 shows a compositional bias: acidic residues; that stretch reads DYDEDEEDQE. Polar residues predominate over residues 437–448; that stretch reads NSLAKKNSSNGK. One can recognise a Helicase C-terminal domain in the interval 491 to 627; that stretch reads EKQKDLEGLT…QTEQAYKMLS (137 aa). The disordered stretch occupies residues 822 to 858; sequence RQRLERRERKPRRERKPRKKRTRGRSSTKLHPWRSKE. The span at 830–858 shows a compositional bias: basic residues; sequence RKPRRERKPRKKRTRGRSSTKLHPWRSKE.

Belongs to the helicase family. RecQ subfamily. Mg(2+) serves as cofactor. Requires Mn(2+) as cofactor. Mostly expressed in roots and seedlings, and, to a lower extent, in leaves, shoots, shoot apical mersitem, inflorescences, flowers, siliques and seeds.

It is found in the nucleus. It carries out the reaction Couples ATP hydrolysis with the unwinding of duplex DNA by translocating in the 3'-5' direction.. It catalyses the reaction ATP + H2O = ADP + phosphate + H(+). Plant specific, probable 3'-5' DNA helicase that may play a role in the repair of DNA. The protein is ATP-dependent DNA helicase Q-like SIM (RECQSIM) of Arabidopsis thaliana (Mouse-ear cress).